A 170-amino-acid chain; its full sequence is Ureidoglycolate lyase (170 aa).

This sequence belongs to the ureidoglycolate lyase family. As to quaternary structure, homodimer. The cofactor is Ni(2+).

It catalyses the reaction (S)-ureidoglycolate = urea + glyoxylate. The protein operates within nitrogen metabolism; (S)-allantoin degradation. Catalyzes the catabolism of the allantoin degradation intermediate (S)-ureidoglycolate, generating urea and glyoxylate. Involved in the utilization of allantoin as nitrogen source. The protein is Ureidoglycolate lyase of Burkholderia mallei (strain NCTC 10247).